A 348-amino-acid chain; its full sequence is Ketol-acid reductoisomerase (NADP(+)) (348 aa).

In terms of domain architecture, KARI N-terminal Rossmann spans 1-179 (MDVHYDADPA…GGTHAGVIET (179 aa)). NADP(+) is bound by residues 22-25 (YGSQ), Arg-45, Ser-48, Ser-50, and 80-83 (DQHQ). His-105 is a catalytic residue. Residue Gly-131 participates in NADP(+) binding. A KARI C-terminal knotted domain is found at 180–325 (TFKDETETDL…QTLRGMMPWL (146 aa)). Residues Asp-188, Glu-192, Glu-224, and Glu-228 each coordinate Mg(2+). Residue Ser-249 coordinates substrate. Residues 323–348 (PWLNGDETSADEDAPDAADTAPASSS) are disordered. The segment covering 339–348 (AADTAPASSS) has biased composition (low complexity).

The protein belongs to the ketol-acid reductoisomerase family. Requires Mg(2+) as cofactor.

It catalyses the reaction (2R)-2,3-dihydroxy-3-methylbutanoate + NADP(+) = (2S)-2-acetolactate + NADPH + H(+). The enzyme catalyses (2R,3R)-2,3-dihydroxy-3-methylpentanoate + NADP(+) = (S)-2-ethyl-2-hydroxy-3-oxobutanoate + NADPH + H(+). It participates in amino-acid biosynthesis; L-isoleucine biosynthesis; L-isoleucine from 2-oxobutanoate: step 2/4. It functions in the pathway amino-acid biosynthesis; L-valine biosynthesis; L-valine from pyruvate: step 2/4. Involved in the biosynthesis of branched-chain amino acids (BCAA). Catalyzes an alkyl-migration followed by a ketol-acid reduction of (S)-2-acetolactate (S2AL) to yield (R)-2,3-dihydroxy-isovalerate. In the isomerase reaction, S2AL is rearranged via a Mg-dependent methyl migration to produce 3-hydroxy-3-methyl-2-ketobutyrate (HMKB). In the reductase reaction, this 2-ketoacid undergoes a metal-dependent reduction by NADPH to yield (R)-2,3-dihydroxy-isovalerate. In Salinibacter ruber (strain DSM 13855 / M31), this protein is Ketol-acid reductoisomerase (NADP(+)).